We begin with the raw amino-acid sequence, 425 residues long: MNSIWKQYIDILQGVVKPALGCTEPICAAYAASVATQMLGSKPETIDVFVSDNLYKNSMGVFVPRTGRVGLAIAAATGAIGGNPDAGLEVLAKITEEEVDEAQKLIDNGCVVVQRETTDEFIYCRVIAKNAVHNAEVTISGGHTLIIEKRLDDNVIFTLDSSLPKTSTASICDGVDITISSIYDFATQAEFDDIKFILEAKELNIALAQEGLNNPYGLEVGRTYQKNIEKGLLAKSLDSDILIYTSAASDARMGGATLPAMSNYGSGNQGIAATIPVVKMADFFNADDEKLARAFIMSHLGAIYIKSHYPPLSAFCGNAVTSAAASMAMVYLAGGTFEQSCSAIQNTISDTSGMICDGAKSTCAMKVGSSAQSAMKSALLALNDHCVTKQGVIADDVEKTIKNIGRMITTGMPNIDHEIIEIMAS.

This sequence belongs to the UPF0597 family.

This is UPF0597 protein VF_0641 from Aliivibrio fischeri (strain ATCC 700601 / ES114) (Vibrio fischeri).